Consider the following 327-residue polypeptide: Methionyl-tRNA formyltransferase (327 aa).

122 to 125 contacts (6S)-5,6,7,8-tetrahydrofolate; that stretch reads SLLP.

This sequence belongs to the Fmt family.

The catalysed reaction is L-methionyl-tRNA(fMet) + (6R)-10-formyltetrahydrofolate = N-formyl-L-methionyl-tRNA(fMet) + (6S)-5,6,7,8-tetrahydrofolate + H(+). Functionally, attaches a formyl group to the free amino group of methionyl-tRNA(fMet). The formyl group appears to play a dual role in the initiator identity of N-formylmethionyl-tRNA by promoting its recognition by IF2 and preventing the misappropriation of this tRNA by the elongation apparatus. The sequence is that of Methionyl-tRNA formyltransferase from Ralstonia nicotianae (strain ATCC BAA-1114 / GMI1000) (Ralstonia solanacearum).